A 367-amino-acid chain; its full sequence is Isocitrate dehydrogenase [NAD] regulatory subunit 1, mitochondrial (367 aa).

The transit peptide at 1-25 directs the protein to the mitochondrion; that stretch reads MSRRSLTLLKNLARNANGSGIQTRS.

This sequence belongs to the isocitrate and isopropylmalate dehydrogenases family. Heterooligomer of catalytic and regulatory subunits. As to expression, ubiquitous. Predominantly expressed in roots, stems and leaves.

The protein resides in the mitochondrion. Performs an essential role in the oxidative function of the citric acid cycle. This is Isocitrate dehydrogenase [NAD] regulatory subunit 1, mitochondrial (IDH1) from Arabidopsis thaliana (Mouse-ear cress).